The primary structure comprises 447 residues: UPF0210 protein Ldb1026 (447 aa).

This sequence belongs to the UPF0210 family. In terms of assembly, homodimer.

In Lactobacillus delbrueckii subsp. bulgaricus (strain ATCC 11842 / DSM 20081 / BCRC 10696 / JCM 1002 / NBRC 13953 / NCIMB 11778 / NCTC 12712 / WDCM 00102 / Lb 14), this protein is UPF0210 protein Ldb1026.